The following is an 88-amino-acid chain: UPF0297 protein BcerKBAB4_4234 (88 aa).

It belongs to the UPF0297 family.

The sequence is that of UPF0297 protein BcerKBAB4_4234 from Bacillus mycoides (strain KBAB4) (Bacillus weihenstephanensis).